Reading from the N-terminus, the 179-residue chain is uncharacterized protein (179 aa).

Disordered stretches follow at residues leucine 26–aspartate 103 and lysine 136–asparagine 179. The segment covering glutamine 34–arginine 61 has biased composition (basic and acidic residues). Over residues alanine 63–asparagine 79 the composition is skewed to low complexity. Basic and acidic residues-rich tracts occupy residues alanine 82–aspartate 103 and glycine 158–asparagine 179.

This is an uncharacterized protein from Escherichia coli (strain K12).